Here is a 1203-residue protein sequence, read N- to C-terminus: DNA-directed RNA polymerase I subunit RPA135 (1203 aa).

Position 2 is an N-acetylserine (Ser2). Ser81 is modified (phosphoserine). The C4-type zinc-finger motif lies at 1104-1131 (CRECGSILTTQQSVPRIGSISTVCCRRC). Ser1156 bears the Phosphoserine mark.

This sequence belongs to the RNA polymerase beta chain family. As to quaternary structure, component of the RNA polymerase I (Pol I) complex consisting of 14 subunits: RPA135, RPA190, RPC40, RPA14, RPB5, RPO26, RPA43, RPB8, RPA12, RPB10, RPC19, RPC10, RPA49 and RPA34. The complex is composed of a horseshoe-shaped core containing ten subunits (RPA135, RPA190, RPB5, RPO26, RPB8, RPB10, RPC10, RPA12, RPC19 and RPC40) where RPA135 and RPA190 form the DNA-binding cleft. Outside of the core, RPA14 and RPA43 form the stalk that mediates interactions with transcription initiation factors and newly synthesized RNA.

The protein resides in the nucleus. It is found in the nucleolus. The catalysed reaction is RNA(n) + a ribonucleoside 5'-triphosphate = RNA(n+1) + diphosphate. Its function is as follows. DNA-dependent RNA polymerases catalyze the transcription of DNA into RNA using the four ribonucleoside triphosphates as substrates. Component of RNA polymerase I (Pol I) which synthesizes ribosomal RNA precursors. Besides, RNA polymerase I has intrinsic RNA cleavage activity. RPA190 and RPA135 both contribute to the polymerase catalytic activity and together form the Pol I active center. In addition, subunit RPA12 contributes a catalytic zinc ribbon that is required for RNA cleavage by Pol I. A single stranded DNA template strand of the promoter is positioned within the central active site cleft of Pol I. A bridging helix emanates from RPA190 and crosses the cleft near the catalytic site and is thought to promote translocation of Pol I by acting as a ratchet that moves the RNA-DNA hybrid through the active site by switching from straight to bent conformations at each step of nucleotide addition. The sequence is that of DNA-directed RNA polymerase I subunit RPA135 (RPA135) from Saccharomyces cerevisiae (strain ATCC 204508 / S288c) (Baker's yeast).